We begin with the raw amino-acid sequence, 199 residues long: MLLPDLHPYTILLSIFIVLLLKQLVASIGKSTIKEFVWLVYLKVSSNQSIKTYNSKQHELHETNKEKRAISAQDEYAKWTKLNRQADKLSAELQKLNQEIQQQKASIDKVSNALLLVLTTLPIWVARVLYRNTHLFYIRQGIFPKYVEWVLALPFLPNGAVGLTIWMFAVNSVVSNFAFLVSFPFAKKVSKPVRDTKIE.

Topologically, residues 1-11 (MLLPDLHPYTI) are lumenal. Residues 12-31 (LLSIFIVLLLKQLVASIGKS) traverse the membrane as a helical segment. The Cytoplasmic portion of the chain corresponds to 32-115 (TIKEFVWLVY…SIDKVSNALL (84 aa)). Positions 66-116 (EKRAISAQDEYAKWTKLNRQADKLSAELQKLNQEIQQQKASIDKVSNALLL) form a coiled coil. Residues 116-136 (LVLTTLPIWVARVLYRNTHLF) form a helical membrane-spanning segment. Over 137–160 (YIRQGIFPKYVEWVLALPFLPNGA) the chain is Lumenal. Residues 161–177 (VGLTIWMFAVNSVVSNF) form a helical membrane-spanning segment. Residues 178 to 199 (AFLVSFPFAKKVSKPVRDTKIE) are Cytoplasmic-facing.

It belongs to the WRB/GET1 family. Component of the Golgi to ER traffic (GET) complex, which is composed of GET1, GET2 and GET3. Within the complex, GET1 and GET2 form a heterotetramer which is stabilized by phosphatidylinositol binding and which binds to the GET3 homodimer.

It is found in the endoplasmic reticulum membrane. The protein localises to the golgi apparatus membrane. Required for the post-translational delivery of tail-anchored (TA) proteins to the endoplasmic reticulum. Together with GET2, acts as a membrane receptor for soluble GET3, which recognizes and selectively binds the transmembrane domain of TA proteins in the cytosol. The GET complex cooperates with the HDEL receptor ERD2 to mediate the ATP-dependent retrieval of resident ER proteins that contain a C-terminal H-D-E-L retention signal from the Golgi to the ER. This is Golgi to ER traffic protein 1 from Candida dubliniensis (strain CD36 / ATCC MYA-646 / CBS 7987 / NCPF 3949 / NRRL Y-17841) (Yeast).